The primary structure comprises 380 residues: Succinate--CoA ligase [ADP-forming] subunit beta 2 (380 aa).

The region spanning 9 to 235 is the ATP-grasp domain; sequence KQIFSKHGIR…YTEADQMERI (227 aa). ATP is bound by residues lysine 45, 52–54, glutamate 91, isoleucine 94, and glutamate 99; that span reads GRG. 2 residues coordinate Mg(2+): asparagine 191 and aspartate 204. Substrate contacts are provided by residues asparagine 255 and 312 to 314; that span reads GIT.

This sequence belongs to the succinate/malate CoA ligase beta subunit family. As to quaternary structure, heterotetramer of two alpha and two beta subunits. It depends on Mg(2+) as a cofactor.

It catalyses the reaction succinate + ATP + CoA = succinyl-CoA + ADP + phosphate. It carries out the reaction GTP + succinate + CoA = succinyl-CoA + GDP + phosphate. The protein operates within carbohydrate metabolism; tricarboxylic acid cycle; succinate from succinyl-CoA (ligase route): step 1/1. Its function is as follows. Succinyl-CoA synthetase functions in the citric acid cycle (TCA), coupling the hydrolysis of succinyl-CoA to the synthesis of either ATP or GTP and thus represents the only step of substrate-level phosphorylation in the TCA. The beta subunit provides nucleotide specificity of the enzyme and binds the substrate succinate, while the binding sites for coenzyme A and phosphate are found in the alpha subunit. This Archaeoglobus fulgidus (strain ATCC 49558 / DSM 4304 / JCM 9628 / NBRC 100126 / VC-16) protein is Succinate--CoA ligase [ADP-forming] subunit beta 2.